Consider the following 28-residue polypeptide: Putative fruR/shl operon leader peptide (28 aa).

The chain is Putative fruR/shl operon leader peptide (fruL) from Escherichia coli O6:H1 (strain CFT073 / ATCC 700928 / UPEC).